Consider the following 231-residue polypeptide: Thermonuclease (231 aa).

The first 26 residues, 1–26, serve as a signal peptide directing secretion; it reads MLVMTEYLLSAGICMAIVSILLIGMA. 2 propeptides span residues 27 to 63 and 64 to 82; these read ISNV…SANA and SQTD…TVYS. Residues 61 to 73 are compositionally biased toward polar residues; that stretch reads ANASQTDNGVNRS. Residues 61-86 are disordered; the sequence is ANASQTDNGVNRSGSEDPTVYSATST. D103 contributes to the Ca(2+) binding site. The active site involves R117. Residues D122 and T123 each coordinate Ca(2+). Catalysis depends on residues E125 and R169. Basic and acidic residues predominate over residues 203–219; it reads HEQHLRKSEAQAKKEKL. Residues 203-231 are disordered; the sequence is HEQHLRKSEAQAKKEKLNIWSEDNADSGQ.

The protein belongs to the thermonuclease family. The cofactor is Ca(2+).

The protein resides in the secreted. It is found in the membrane. It catalyses the reaction Endonucleolytic cleavage to nucleoside 3'-phosphates and 3'-phosphooligonucleotide end-products.. In terms of biological role, enzyme that catalyzes the hydrolysis of both DNA and RNA at the 5' position of the phosphodiester bond. The protein is Thermonuclease of Staphylococcus aureus.